A 387-amino-acid polypeptide reads, in one-letter code: Putative ribosomal RNA large subunit methyltransferase MJ1649 (387 aa).

In terms of domain architecture, PUA spans 5–81; the sequence is LIKLEIDRRA…EEIDYDFFYK (77 aa).

It belongs to the methyltransferase superfamily. RlmI family.

It is found in the cytoplasm. This Methanocaldococcus jannaschii (strain ATCC 43067 / DSM 2661 / JAL-1 / JCM 10045 / NBRC 100440) (Methanococcus jannaschii) protein is Putative ribosomal RNA large subunit methyltransferase MJ1649.